A 439-amino-acid chain; its full sequence is Nuclear hormone receptor family member nhr-97 (439 aa).

Over residues 1 to 13 (MSGDAQPSSNQRA) the composition is skewed to polar residues. Residues 1–22 (MSGDAQPSSNQRATEARPPPSP) are disordered. The nuclear receptor DNA-binding region spans 32 to 108 (GALCVVCGDR…VGMKIEAVKM (77 aa)). 2 NR C4-type zinc fingers span residues 35–56 (CVVC…CHGC) and 72–96 (CRYG…FHRC). The tract at residues 112 to 135 (LTKRKKEKTDEDDTDDGGSHESFE) is disordered. Residues 173 to 408 (FVQPSLQNLL…GEGLLFWQLY (236 aa)) enclose the NR LBD domain.

Belongs to the nuclear hormone receptor family.

Its subcellular location is the nucleus. In terms of biological role, orphan nuclear receptor. The chain is Nuclear hormone receptor family member nhr-97 (nhr-97) from Caenorhabditis elegans.